The primary structure comprises 199 residues: Probable GTP-binding protein EngB (199 aa).

Residues 22 to 195 enclose the EngB-type G domain; sequence QLPEIALSGR…WEWIEQQCDI (174 aa). GTP-binding positions include 30-37, 57-61, 75-78, 142-145, and 174-176; these read GRSNVGKS, GKTQT, DVPG, TKMD, and FSA. Positions 37 and 59 each coordinate Mg(2+).

It belongs to the TRAFAC class TrmE-Era-EngA-EngB-Septin-like GTPase superfamily. EngB GTPase family. Mg(2+) is required as a cofactor.

Its function is as follows. Necessary for normal cell division and for the maintenance of normal septation. The sequence is that of Probable GTP-binding protein EngB from Latilactobacillus sakei subsp. sakei (strain 23K) (Lactobacillus sakei subsp. sakei).